A 443-amino-acid polypeptide reads, in one-letter code: C4-dicarboxylate transport protein (443 aa).

Helical transmembrane passes span 10–30 (SLYF…HFYP), 46–66 (LIKM…IAGM), 78–98 (YALL…LIVV), 143–163 (IVGA…VIFG), 199–219 (PIGA…GSLV), 224–244 (LMIC…GGIC), 291–311 (VVGL…SIYL), 332–352 (ITLL…TGSG), and 354–374 (IVLA…LALI).

It belongs to the dicarboxylate/amino acid:cation symporter (DAACS) (TC 2.A.23) family.

The protein resides in the cell inner membrane. In terms of biological role, responsible for the transport of dicarboxylates such as succinate, fumarate, and malate from the periplasm across the membrane. The sequence is that of C4-dicarboxylate transport protein from Pseudomonas fluorescens (strain SBW25).